Here is a 131-residue protein sequence, read N- to C-terminus: MLHLHIFSWVIGIILFIVSYISFTKTGAPKKAYKPLHMTLRLFLVLILFSGVWQVVEEFATATGSTHMLLTLKMICGIGVVALMEVTLVRKQRGASHKGLFWGTIALIIVTMALGIILPGGPISNMFVITK.

4 helical membrane passes run 1–21, 42–62, 69–89, and 99–119; these read MLHLHIFSWVIGIILFIVSYI, LFLVLILFSGVWQVVEEFATA, LLTLKMICGIGVVALMEVTLV, and GLFWGTIALIIVTMALGIILP.

Belongs to the UPF0344 family.

It localises to the cell membrane. The chain is UPF0344 protein Sca_0577 from Staphylococcus carnosus (strain TM300).